The chain runs to 152 residues: D-aminoacyl-tRNA deacylase (152 aa).

Residues 142–143 carry the Gly-cisPro motif, important for rejection of L-amino acids motif; that stretch reads GP.

Belongs to the DTD family. As to quaternary structure, homodimer.

It localises to the cytoplasm. The catalysed reaction is glycyl-tRNA(Ala) + H2O = tRNA(Ala) + glycine + H(+). The enzyme catalyses a D-aminoacyl-tRNA + H2O = a tRNA + a D-alpha-amino acid + H(+). Its function is as follows. An aminoacyl-tRNA editing enzyme that deacylates mischarged D-aminoacyl-tRNAs. Also deacylates mischarged glycyl-tRNA(Ala), protecting cells against glycine mischarging by AlaRS. Acts via tRNA-based rather than protein-based catalysis; rejects L-amino acids rather than detecting D-amino acids in the active site. By recycling D-aminoacyl-tRNA to D-amino acids and free tRNA molecules, this enzyme counteracts the toxicity associated with the formation of D-aminoacyl-tRNA entities in vivo and helps enforce protein L-homochirality. In Burkholderia lata (strain ATCC 17760 / DSM 23089 / LMG 22485 / NCIMB 9086 / R18194 / 383), this protein is D-aminoacyl-tRNA deacylase.